The primary structure comprises 447 residues: Methylenetetrahydrofolate--tRNA-(uracil-5-)-methyltransferase TrmFO (447 aa).

Residue 8-13 (GGGLAG) coordinates FAD. The tract at residues 398-421 (NWGLVPAPPKRENGRRLGRQERRR) is disordered. A compositionally biased stretch (basic and acidic residues) spans 406 to 417 (PKRENGRRLGRQ).

Belongs to the MnmG family. TrmFO subfamily. It depends on FAD as a cofactor.

It localises to the cytoplasm. It catalyses the reaction uridine(54) in tRNA + (6R)-5,10-methylene-5,6,7,8-tetrahydrofolate + NADH + H(+) = 5-methyluridine(54) in tRNA + (6S)-5,6,7,8-tetrahydrofolate + NAD(+). It carries out the reaction uridine(54) in tRNA + (6R)-5,10-methylene-5,6,7,8-tetrahydrofolate + NADPH + H(+) = 5-methyluridine(54) in tRNA + (6S)-5,6,7,8-tetrahydrofolate + NADP(+). In terms of biological role, catalyzes the folate-dependent formation of 5-methyl-uridine at position 54 (M-5-U54) in all tRNAs. This is Methylenetetrahydrofolate--tRNA-(uracil-5-)-methyltransferase TrmFO from Rubrobacter xylanophilus (strain DSM 9941 / JCM 11954 / NBRC 16129 / PRD-1).